Consider the following 417-residue polypeptide: Mast cell carboxypeptidase A (417 aa).

The signal sequence occupies residues 1–15; it reads MRFFLLMAVIYTTLA. Positions 16–109 are cleaved as a propeptide — activation peptide; sequence IAPVHFDREK…IEKQFDVKDE (94 aa). One can recognise a Peptidase M14 domain in the interval 118–412; that stretch reads KYNDWDKIVS…LSVKFIAKYI (295 aa). Intrachain disulfides connect C173-C186 and C245-C268. Residues H176 and E179 each coordinate Zn(2+). Residue H304 participates in Zn(2+) binding. Catalysis depends on E378, which acts as the Proton donor/acceptor.

The protein belongs to the peptidase M14 family. The cofactor is Zn(2+).

The protein localises to the cytoplasmic vesicle. The protein resides in the secretory vesicle. It carries out the reaction Release of a C-terminal amino acid, but little or no action with -Asp, -Glu, -Arg, -Lys or -Pro.. This is Mast cell carboxypeptidase A (Cpa3) from Mus musculus (Mouse).